Consider the following 132-residue polypeptide: Small ribosomal subunit protein uS19 (132 aa).

Belongs to the universal ribosomal protein uS19 family.

Protein S19 forms a complex with S13 that binds strongly to the 16S ribosomal RNA. In Pyrococcus abyssi (strain GE5 / Orsay), this protein is Small ribosomal subunit protein uS19 (rps19).